We begin with the raw amino-acid sequence, 273 residues long: 2,3,4,5-tetrahydropyridine-2,6-dicarboxylate N-succinyltransferase (273 aa).

Substrate is bound by residues Arg104 and Asp141.

This sequence belongs to the transferase hexapeptide repeat family. In terms of assembly, homotrimer.

Its subcellular location is the cytoplasm. It carries out the reaction (S)-2,3,4,5-tetrahydrodipicolinate + succinyl-CoA + H2O = (S)-2-succinylamino-6-oxoheptanedioate + CoA. It participates in amino-acid biosynthesis; L-lysine biosynthesis via DAP pathway; LL-2,6-diaminopimelate from (S)-tetrahydrodipicolinate (succinylase route): step 1/3. In Neisseria meningitidis serogroup C (strain 053442), this protein is 2,3,4,5-tetrahydropyridine-2,6-dicarboxylate N-succinyltransferase.